The chain runs to 187 residues: 3'-5' DNA exonuclease Cap18 (187 aa).

The Exonuclease domain occupies 9-173 (VSVDVETSGP…HDARYQAELF (165 aa)). 4 residues coordinate Mg(2+): Asp-12, Met-25, His-160, and Asp-165. Catalysis depends on His-160, which acts as the Proton donor/acceptor.

It belongs to the Cap18 exonuclease family. In terms of assembly, homodimer.

Functionally, effector component of a CBASS antivirus system. CBASS (cyclic oligonucleotide-based antiphage signaling system) provides immunity against bacteriophage. The CD-NTase protein synthesizes cyclic nucleotides in response to infection; these serve as specific second messenger signals. The signals activate a diverse range of effectors, leading to bacterial cell death and thus abortive phage infection. A type III CBASS system. A sequence non-specific 3'-5' DNA exonuclease that preferentially degrades ssDNA with 3' overhangs or a mismatch at the 3' end. Expression of this CBASS system (Cap17-CapW-CdnC-Cap7-Cap6-Cap18-Cap19) in a susceptible E.coli (strain JP313) confers resistance to bacteriophage lambda cI--. The protein is 3'-5' DNA exonuclease Cap18 of Escherichia coli.